The chain runs to 324 residues: Beta-ketoacyl-[acyl-carrier-protein] synthase III (324 aa).

Catalysis depends on residues Cys114 and His251. An ACP-binding region spans residues 252–256; it reads QANQR. Residue Asn281 is part of the active site.

It belongs to the thiolase-like superfamily. FabH family. Homodimer.

It localises to the cytoplasm. The catalysed reaction is malonyl-[ACP] + acetyl-CoA + H(+) = 3-oxobutanoyl-[ACP] + CO2 + CoA. The protein operates within lipid metabolism; fatty acid biosynthesis. Catalyzes the condensation reaction of fatty acid synthesis by the addition to an acyl acceptor of two carbons from malonyl-ACP. Catalyzes the first condensation reaction which initiates fatty acid synthesis and may therefore play a role in governing the total rate of fatty acid production. Possesses both acetoacetyl-ACP synthase and acetyl transacylase activities. Its substrate specificity determines the biosynthesis of branched-chain and/or straight-chain of fatty acids. The chain is Beta-ketoacyl-[acyl-carrier-protein] synthase III from Rhodospirillum rubrum (strain ATCC 11170 / ATH 1.1.1 / DSM 467 / LMG 4362 / NCIMB 8255 / S1).